Reading from the N-terminus, the 953-residue chain is TPR repeat-containing protein ZIP4 (953 aa).

The stretch at alanine 129 to alanine 162 is one TPR 1 repeat. The interval alanine 248–proline 269 is disordered. TPR repeat units follow at residues histidine 432 to aspartate 465 and alanine 473 to isoleucine 506. The interval valine 925–valine 953 is disordered. A compositionally biased stretch (polar residues) spans isoleucine 943–valine 953.

As to quaternary structure, interacts with HEI10 and SHOC1.

The protein localises to the nucleus. It is found in the chromosome. Its function is as follows. Required for crossover formation, complete synapsis of homologous chromosomes and bivalent formation during meiosis. Is specific to recombination events resulting in interference-sensitive crossovers (class I meiotic crossover) and works cooperatively with MER3 to promote crossovers. The chain is TPR repeat-containing protein ZIP4 from Oryza sativa subsp. japonica (Rice).